The chain runs to 626 residues: Putative Xaa-Pro dipeptidyl-peptidase (626 aa).

Residues serine 231, aspartate 348, and histidine 379 each act as charge relay system in the active site.

It belongs to the peptidase S15 family.

It catalyses the reaction Hydrolyzes Xaa-Pro-|- bonds to release unblocked, N-terminal dipeptides from substrates including Ala-Pro-|-p-nitroanilide and (sequentially) Tyr-Pro-|-Phe-Pro-|-Gly-Pro-|-Ile.. This chain is Putative Xaa-Pro dipeptidyl-peptidase, found in Rhodopirellula baltica (strain DSM 10527 / NCIMB 13988 / SH1).